A 77-amino-acid polypeptide reads, in one-letter code: Conotoxin King-Kong 2 (77 aa).

Residues 1–22 (MKLTCMMIVAVLFLTAWTFVTA) form the signal peptide. A propeptide spanning residues 23–49 (DDSGNGLENLFSKAHHEMKNPEASNLN) is cleaved from the precursor. 3 disulfides stabilise this stretch: cysteine 52/cysteine 67, cysteine 59/cysteine 71, and cysteine 66/cysteine 76. At cysteine 76 the chain carries Cysteine amide.

It belongs to the conotoxin O1 superfamily. As to expression, expressed by the venom duct.

The protein localises to the secreted. This is Conotoxin King-Kong 2 from Conus textile (Cloth-of-gold cone).